A 141-amino-acid chain; its full sequence is MAKKVTGMIKLQLPAGKATPAPPVGPALGQHGVNIMGFCKEFNAKTADKAGLIIPVVITVYQDRSFSFILKTPPAAVLIKKELGLESGSGVPNRTKVGNITKEQIRKIAELKMPDLNAATIETAMSMIEGTARSMGVVVVE.

Belongs to the universal ribosomal protein uL11 family. In terms of assembly, part of the ribosomal stalk of the 50S ribosomal subunit. Interacts with L10 and the large rRNA to form the base of the stalk. L10 forms an elongated spine to which L12 dimers bind in a sequential fashion forming a multimeric L10(L12)X complex. Post-translationally, one or more lysine residues are methylated.

Forms part of the ribosomal stalk which helps the ribosome interact with GTP-bound translation factors. The polypeptide is Large ribosomal subunit protein uL11 (Clostridium perfringens (strain ATCC 13124 / DSM 756 / JCM 1290 / NCIMB 6125 / NCTC 8237 / Type A)).